Here is a 163-residue protein sequence, read N- to C-terminus: Calcium-binding protein I (163 aa).

EF-hand domains follow at residues 20 to 42 (DKNKDRQYSIDEIVQLLKKNSKN), 82 to 117 (KPEIDIESFLLRFDKNNDKMISHHELKTKLDELGCG), and 118 to 153 (NSKKTTDYVFEQIDTNKEGSLSYEDLEGFVKFLKQD). Ca(2+) is bound by residues D95, N97, D99, M101, E106, D131, N133, E135, S137, and D142.

The polypeptide is Calcium-binding protein I (cbpI) (Dictyostelium discoideum (Social amoeba)).